The primary structure comprises 353 residues: MYAALRKAFFLVPPERIHTWVFAGLRAATTAEPVRRRLARRLAPHDPILASTVFGTRFPGPLGLAAGFDKDGIGVHAWGALGFGYAEVGTVTAQAQPGNPAPRLFRLPADRALLNRMGFNNHGAGALAVQLTRTSSDVPIGVNIGKTKVTPPEHAAEDYAESARLLGPLAAYLVVNVSSPNTPGLRDLQSVESLRPILSAVLAETSTPVLVKIAPDLADQDIDEIADLAVELGLAGIVATNTTISRAGLATPGVDALGPGGISGPPVARRALEVLRRLYARVGDRLVLISVGGIETADDAWERIVSGASLLQGYTGFVYGGGLWAKDINDGLAARLRGHGFSGLAEAVGSAAR.

FMN-binding positions include 66–70 (AGFDK) and Thr90. Residue Lys70 participates in substrate binding. 115–119 (NRMGF) contributes to the substrate binding site. Residues Asn143 and Asn176 each contribute to the FMN site. Residue Asn176 participates in substrate binding. Catalysis depends on Ser179, which acts as the Nucleophile. Asn181 serves as a coordination point for substrate. FMN-binding residues include Lys212 and Thr240. Residue 241–242 (NT) coordinates substrate. Residues Gly264, Gly293, and 314–315 (YT) contribute to the FMN site.

Belongs to the dihydroorotate dehydrogenase family. Type 2 subfamily. As to quaternary structure, monomer. FMN serves as cofactor.

The protein localises to the cell membrane. It catalyses the reaction (S)-dihydroorotate + a quinone = orotate + a quinol. The protein operates within pyrimidine metabolism; UMP biosynthesis via de novo pathway; orotate from (S)-dihydroorotate (quinone route): step 1/1. In terms of biological role, catalyzes the conversion of dihydroorotate to orotate with quinone as electron acceptor. This is Dihydroorotate dehydrogenase (quinone) from Mycolicibacterium vanbaalenii (strain DSM 7251 / JCM 13017 / BCRC 16820 / KCTC 9966 / NRRL B-24157 / PYR-1) (Mycobacterium vanbaalenii).